The primary structure comprises 392 residues: MEVTQRGCDELLIAAEWEQKLARSAATGVPLRIKLGLDPTAPDIHIGHTVVLNKMRQLQDLGHQVIFLIGDFTSTIGDPSGRNATRPPLTREQIEANAQTYYRQASMVLDPSKTEIRYNSEWCDPLGARGIIQLAAKYTVARMMERDDFTKRYKAGVPISVHEFLYPLMQGYDSVALKSDLELGGTDQKFNLLVGRELQKEYGQEPQCILTMPLLVGLDGVEKMSKSKGNYVGISEAPNEMFGKLMSISDDLMWTYYTLLSFRPLAEIDLMKQEVTLGRNPRDCKVLLAQEIIARFHSQADAERALEDFNHRARGGVPDDIPQIELSGAPIGIAQLLKQAGLCPSTSEANRNIEQGGVKIDGTVISDKGLKVEAGTFVMQVGKRRFARVVLS.

Residues P39–H48 carry the 'HIGH' region motif. The short motif at K223 to S227 is the 'KMSKS' region element. Position 226 (K226) interacts with ATP. The 61-residue stretch at I331–L391 folds into the S4 RNA-binding domain.

It belongs to the class-I aminoacyl-tRNA synthetase family. TyrS type 2 subfamily. Homodimer.

It localises to the cytoplasm. The catalysed reaction is tRNA(Tyr) + L-tyrosine + ATP = L-tyrosyl-tRNA(Tyr) + AMP + diphosphate + H(+). In terms of biological role, catalyzes the attachment of tyrosine to tRNA(Tyr) in a two-step reaction: tyrosine is first activated by ATP to form Tyr-AMP and then transferred to the acceptor end of tRNA(Tyr). The polypeptide is Tyrosine--tRNA ligase (Ralstonia nicotianae (strain ATCC BAA-1114 / GMI1000) (Ralstonia solanacearum)).